Consider the following 741-residue polypeptide: Copper-transporting ATPase (741 aa).

The region spanning methionine 1–lysine 67 is the HMA domain. Over methionine 1 to lysine 83 the chain is Cytoplasmic. Cu cation is bound by residues cysteine 12 and cysteine 15. The chain crosses the membrane as a helical span at residues leucine 84–serine 104. Residues proline 105–alanine 124 lie on the Extracellular side of the membrane. A helical transmembrane segment spans residues cysteine 125–glutamine 144. At glycine 145–histidine 151 the chain is on the cytoplasmic side. The helical transmembrane segment at arginine 152 to leucine 172 threads the bilayer. Residues tryptophan 173 to phenylalanine 190 are Extracellular-facing. A helical transmembrane segment spans residues glutamate 191–lysine 211. Topologically, residues aspartate 212–lysine 339 are cytoplasmic. Residues valine 340 to isoleucine 362 form a helical membrane-spanning segment. Topologically, residues alanine 363 to alanine 375 are extracellular. Residues leucine 376–leucine 393 traverse the membrane as a helical segment. Residues alanine 394–isoleucine 681 are Cytoplasmic-facing. Aspartate 431 functions as the 4-aspartylphosphate intermediate in the catalytic mechanism. Residues aspartate 627 and aspartate 631 each coordinate Mg(2+). A helical transmembrane segment spans residues lysine 682–glycine 701. Topologically, residues valine 702–proline 712 are extracellular. A helical transmembrane segment spans residues alanine 713–glutamine 731. At arginine 732–histidine 741 the chain is on the cytoplasmic side.

Belongs to the cation transport ATPase (P-type) (TC 3.A.3) family. Type IB subfamily.

The protein resides in the cell membrane. The enzyme catalyses Cu(2+)(in) + ATP + H2O = Cu(2+)(out) + ADP + phosphate + H(+). Probably involved in copper export. This Helicobacter pylori (Campylobacter pylori) protein is Copper-transporting ATPase (copA).